Consider the following 207-residue polypeptide: N-(5'-phosphoribosyl)anthranilate isomerase (207 aa).

It belongs to the TrpF family.

It carries out the reaction N-(5-phospho-beta-D-ribosyl)anthranilate = 1-(2-carboxyphenylamino)-1-deoxy-D-ribulose 5-phosphate. It participates in amino-acid biosynthesis; L-tryptophan biosynthesis; L-tryptophan from chorismate: step 3/5. The protein is N-(5'-phosphoribosyl)anthranilate isomerase of Stutzerimonas stutzeri (strain A1501) (Pseudomonas stutzeri).